The following is a 213-amino-acid chain: Large ribosomal subunit protein uL3 (213 aa).

Glutamine 151 bears the N5-methylglutamine mark.

The protein belongs to the universal ribosomal protein uL3 family. In terms of assembly, part of the 50S ribosomal subunit. Forms a cluster with proteins L14 and L19. Post-translationally, methylated by PrmB.

Its function is as follows. One of the primary rRNA binding proteins, it binds directly near the 3'-end of the 23S rRNA, where it nucleates assembly of the 50S subunit. The chain is Large ribosomal subunit protein uL3 from Allorhizobium ampelinum (strain ATCC BAA-846 / DSM 112012 / S4) (Agrobacterium vitis (strain S4)).